The following is a 528-amino-acid chain: Protein HPH2 (528 aa).

The span at 1–13 shows a compositional bias: low complexity; it reads MQNAQIKSSSKGS. Disordered regions lie at residues 1–52, 170–193, 230–257, and 270–334; these read MQNA…STVE, AQQHPAHRHYKDNDKYGLKSPSRS, ILPNVISKPSKRPTHHSHSSDGSSSTQT, and ESSP…QSVA. The span at 17 to 36 shows a compositional bias: basic and acidic residues; the sequence is GTDRNSKDGVEKRPLEDVKQ. Low complexity-rich tracts occupy residues 283 to 296 and 308 to 332; these read PSVASESSPAVANP and SFSQSSSSSLSSSSSSSSSTSFSQS. A helical membrane pass occupies residues 505–521; that stretch reads ALDIVFLIIIIVICYTF.

As to quaternary structure, interacts with HPH1/FRT1. Post-translationally, phosphorylated by CDC28.

It localises to the endoplasmic reticulum membrane. Its function is as follows. Required for growth under high NaCl, alkaline pH and cell wall stress. This chain is Protein HPH2 (FRT2), found in Saccharomyces cerevisiae (strain ATCC 204508 / S288c) (Baker's yeast).